The sequence spans 446 residues: Phosphoglucosamine mutase (446 aa).

Ser-103 (phosphoserine intermediate) is an active-site residue. The Mg(2+) site is built by Ser-103, Asp-242, Asp-244, and Asp-246. At Ser-103 the chain carries Phosphoserine.

This sequence belongs to the phosphohexose mutase family. It depends on Mg(2+) as a cofactor. In terms of processing, activated by phosphorylation.

It catalyses the reaction alpha-D-glucosamine 1-phosphate = D-glucosamine 6-phosphate. Catalyzes the conversion of glucosamine-6-phosphate to glucosamine-1-phosphate. In Vibrio cholerae serotype O1 (strain ATCC 39541 / Classical Ogawa 395 / O395), this protein is Phosphoglucosamine mutase.